A 157-amino-acid polypeptide reads, in one-letter code: Protein Smg (157 aa).

This sequence belongs to the Smg family.

The protein is Protein Smg of Buchnera aphidicola subsp. Acyrthosiphon pisum (strain Tuc7).